The sequence spans 62 residues: Photosystem II reaction center protein Z (62 aa).

2 helical membrane passes run 8-28 (ALAA…VAYA) and 41-61 (FVGS…NFFV).

This sequence belongs to the PsbZ family. In terms of assembly, PSII is composed of 1 copy each of membrane proteins PsbA, PsbB, PsbC, PsbD, PsbE, PsbF, PsbH, PsbI, PsbJ, PsbK, PsbL, PsbM, PsbT, PsbX, PsbY, PsbZ, Psb30/Ycf12, peripheral proteins PsbO, CyanoQ (PsbQ), PsbU, PsbV and a large number of cofactors. It forms dimeric complexes.

The protein localises to the cellular thylakoid membrane. Functionally, may control the interaction of photosystem II (PSII) cores with the light-harvesting antenna, regulates electron flow through the 2 photosystem reaction centers. PSII is a light-driven water plastoquinone oxidoreductase, using light energy to abstract electrons from H(2)O, generating a proton gradient subsequently used for ATP formation. The polypeptide is Photosystem II reaction center protein Z (Picosynechococcus sp. (strain ATCC 27264 / PCC 7002 / PR-6) (Agmenellum quadruplicatum)).